A 282-amino-acid polypeptide reads, in one-letter code: Bifunctional protein FolD (282 aa).

NADP(+)-binding positions include Asn165 to Ser167, Ser190, and Ile231.

It belongs to the tetrahydrofolate dehydrogenase/cyclohydrolase family. In terms of assembly, homodimer.

The enzyme catalyses (6R)-5,10-methylene-5,6,7,8-tetrahydrofolate + NADP(+) = (6R)-5,10-methenyltetrahydrofolate + NADPH. It catalyses the reaction (6R)-5,10-methenyltetrahydrofolate + H2O = (6R)-10-formyltetrahydrofolate + H(+). Its pathway is one-carbon metabolism; tetrahydrofolate interconversion. Functionally, catalyzes the oxidation of 5,10-methylenetetrahydrofolate to 5,10-methenyltetrahydrofolate and then the hydrolysis of 5,10-methenyltetrahydrofolate to 10-formyltetrahydrofolate. The protein is Bifunctional protein FolD of Clostridium botulinum (strain 657 / Type Ba4).